The chain runs to 229 residues: Translation initiation factor IF-3 (229 aa).

2 disordered regions span residues 1 to 21 and 184 to 229; these read MAIQ…TNRR and QAQR…AGPR. Residues 192 to 203 show a composition bias toward low complexity; it reads AAAQAAPAAAPQ. Residues 204 to 221 show a composition bias toward pro residues; the sequence is PGAPAAPPAAPAPAPAPE.

It belongs to the IF-3 family. Monomer.

It is found in the cytoplasm. In terms of biological role, IF-3 binds to the 30S ribosomal subunit and shifts the equilibrium between 70S ribosomes and their 50S and 30S subunits in favor of the free subunits, thus enhancing the availability of 30S subunits on which protein synthesis initiation begins. The sequence is that of Translation initiation factor IF-3 from Anaeromyxobacter sp. (strain Fw109-5).